The chain runs to 91 residues: Small ribosomal subunit protein uS19 (91 aa).

The protein belongs to the universal ribosomal protein uS19 family.

In terms of biological role, protein S19 forms a complex with S13 that binds strongly to the 16S ribosomal RNA. The sequence is that of Small ribosomal subunit protein uS19 from Aliarcobacter butzleri (strain RM4018) (Arcobacter butzleri).